We begin with the raw amino-acid sequence, 476 residues long: Ribosomal RNA small subunit methyltransferase F (476 aa).

S-adenosyl-L-methionine is bound by residues 124–130, E148, D175, and D193; that span reads ASAPGSK. The active-site Nucleophile is C246.

This sequence belongs to the class I-like SAM-binding methyltransferase superfamily. RsmB/NOP family.

Its subcellular location is the cytoplasm. The catalysed reaction is cytidine(1407) in 16S rRNA + S-adenosyl-L-methionine = 5-methylcytidine(1407) in 16S rRNA + S-adenosyl-L-homocysteine + H(+). Functionally, specifically methylates the cytosine at position 1407 (m5C1407) of 16S rRNA. This chain is Ribosomal RNA small subunit methyltransferase F, found in Photobacterium profundum (strain SS9).